The primary structure comprises 637 residues: tRNA uridine 5-carboxymethylaminomethyl modification enzyme MnmG (637 aa).

FAD-binding positions include 15-20, valine 127, and serine 182; that span reads GAGHAG. 274–288 is an NAD(+) binding site; the sequence is GPRYCPSIEDKVVRF. Position 371 (glutamine 371) interacts with FAD.

This sequence belongs to the MnmG family. In terms of assembly, homodimer. Heterotetramer of two MnmE and two MnmG subunits. FAD serves as cofactor.

It localises to the cytoplasm. In terms of biological role, NAD-binding protein involved in the addition of a carboxymethylaminomethyl (cmnm) group at the wobble position (U34) of certain tRNAs, forming tRNA-cmnm(5)s(2)U34. The polypeptide is tRNA uridine 5-carboxymethylaminomethyl modification enzyme MnmG (Heliobacterium modesticaldum (strain ATCC 51547 / Ice1)).